Reading from the N-terminus, the 96-residue chain is Small ribosomal subunit protein bS18 (96 aa).

It belongs to the bacterial ribosomal protein bS18 family. In terms of assembly, part of the 30S ribosomal subunit. Forms a tight heterodimer with protein bS6.

In terms of biological role, binds as a heterodimer with protein bS6 to the central domain of the 16S rRNA, where it helps stabilize the platform of the 30S subunit. This chain is Small ribosomal subunit protein bS18, found in Borreliella burgdorferi (strain ATCC 35210 / DSM 4680 / CIP 102532 / B31) (Borrelia burgdorferi).